A 210-amino-acid chain; its full sequence is MSSQNANLMREVRLFENHSEREQMENLSELFAVLNALEHLEKMFSRDHVSADEYKSECFKLIDQYKVTMRLVHGATSIEDFAKKYRLHCPAAIERIREGRPITVKDDQGNVLKHIASIVEQFITFLDALRLNTRAVDDLYPGLDDLYNAINTTSRVPIDAIVTTKVKKWHDRLSSMAASDEISDEDARQMIFDVESAYQAFNKALNELKH.

The VPS28 N-terminal domain maps to 1-106 (MSSQNANLMR…REGRPITVKD (106 aa)). The region spanning 110–206 (NVLKHIASIV…AYQAFNKALN (97 aa)) is the VPS28 C-terminal domain.

Belongs to the VPS28 family. As to quaternary structure, component of the ESCRT-I complex (endosomal sorting complex required for transport I). Expressed in embryos.

Its subcellular location is the endosome. Functionally, component of the ESCRT-I complex, a regulator of vesicular trafficking process. In Caenorhabditis elegans, this protein is Vacuolar protein sorting-associated protein 28 homolog (vps-28).